A 231-amino-acid chain; its full sequence is uncharacterized protein (231 aa).

Residue 10 to 34 (VVTGAGSGIGEAIATLLHEEGAKVV) coordinates NADP(+). S140 contributes to the substrate binding site. The Proton acceptor role is filled by Y153.

The protein belongs to the short-chain dehydrogenases/reductases (SDR) family.

This is an uncharacterized protein from Staphylococcus aureus (strain MRSA252).